Consider the following 1781-residue polypeptide: Chitin synthase 7 (1781 aa).

6 N-linked (GlcNAc...) asparagine glycosylation sites follow: N133, N534, N629, N644, N655, and N660. A run of 2 helical transmembrane segments spans residues 741 to 761 and 777 to 797; these read AWVA…LKFV and LVLF…IIGF. N-linked (GlcNAc...) asparagine glycans are attached at residues N889 and N1011. Residues 1048-1068 form a helical membrane-spanning segment; it reads LLLAFAIIICIVTAVKFLAAL. N-linked (GlcNAc...) asparagine glycosylation occurs at N1413. 3 consecutive transmembrane segments (helical) span residues 1444-1464, 1471-1491, and 1499-1519; these read LTGT…IYVL, IPYI…LIFI, and IGWM…LPLY. An N-linked (GlcNAc...) asparagine glycan is attached at N1526. Residues 1677–1712 are disordered; the sequence is QANLSPAAGGGHSRSGTALGFSSGSRSPMPDAMRSQ. Residues 1690 to 1702 are compositionally biased toward polar residues; it reads RSGTALGFSSGSR. One can recognise a DEK-C domain in the interval 1723–1779; it reads GPTDMAIVESIRSVLCEVDLDTVTKKQVRALVEQRLQTELVGERRTFMDRQIDHELE.

Belongs to the chitin synthase family. Class V subfamily.

The protein localises to the cell membrane. It carries out the reaction [(1-&gt;4)-N-acetyl-beta-D-glucosaminyl](n) + UDP-N-acetyl-alpha-D-glucosamine = [(1-&gt;4)-N-acetyl-beta-D-glucosaminyl](n+1) + UDP + H(+). Polymerizes chitin, a structural polymer of the cell wall and septum, by transferring the sugar moiety of UDP-GlcNAc to the non-reducing end of the growing chitin polymer. Shows additive effects in septum formation with CHS1, CHS2, CHS3A, CHS4, CHS5 and CHS6. Indispensable for perithecia formation and regulates conidiation. Plays an important role in the response to cell wall stress. Also required for hyphal growth and pathogenicity. This Gibberella zeae (strain ATCC MYA-4620 / CBS 123657 / FGSC 9075 / NRRL 31084 / PH-1) (Wheat head blight fungus) protein is Chitin synthase 7.